An 87-amino-acid chain; its full sequence is Sec-independent protein translocase protein TatA (87 aa).

Residues 1-21 traverse the membrane as a helical segment; it reads MGGMSITHWIVVAVVVMIFFG. A disordered region spans residues 40-87; the sequence is KKGMSEDDTTPPAAPPAPAPRLENQPLPPENTTQNVAQNVPNDIKNNQ. Positions 69–87 are enriched in polar residues; sequence ENTTQNVAQNVPNDIKNNQ.

This sequence belongs to the TatA/E family. The Tat system comprises two distinct complexes: a TatABC complex, containing multiple copies of TatA, TatB and TatC subunits, and a separate TatA complex, containing only TatA subunits. Substrates initially bind to the TatABC complex, which probably triggers association of the separate TatA complex to form the active translocon.

It is found in the cell inner membrane. Its function is as follows. Part of the twin-arginine translocation (Tat) system that transports large folded proteins containing a characteristic twin-arginine motif in their signal peptide across membranes. TatA could form the protein-conducting channel of the Tat system. The chain is Sec-independent protein translocase protein TatA from Zymomonas mobilis subsp. mobilis (strain ATCC 31821 / ZM4 / CP4).